Reading from the N-terminus, the 785-residue chain is E3 UFM1-protein ligase 1 homolog (785 aa).

The disordered stretch occupies residues 404–483 (GGNASNQLDD…GGGGSNKKSV (80 aa)).

It belongs to the UFL1 family.

Functionally, E3 UFM1-protein ligase that mediates ufmylation of target proteins. This is E3 UFM1-protein ligase 1 homolog from Drosophila willistoni (Fruit fly).